The primary structure comprises 423 residues: Mannan endo-1,4-beta-mannosidase (423 aa).

Residues 1-27 form the signal peptide; the sequence is MKTITTARLPWAAQSFALGICLIALLG. Positions 56–409 constitute a GH26 domain; that stretch reads METRSLFAFM…YADEFTAFNR (354 aa). 3 residues coordinate substrate: Glu121, His143, and Trp162. Glu212 (proton donor) is an active-site residue. Positions 217 and 285 each coordinate substrate. Residue Glu320 is the Nucleophile of the active site. Substrate contacts are provided by residues 360–361 and His377; that span reads WR.

Belongs to the glycosyl hydrolase 26 family. Homodimer.

It carries out the reaction Random hydrolysis of (1-&gt;4)-beta-D-mannosidic linkages in mannans, galactomannans and glucomannans.. Functionally, catalyzes the endo hydrolysis of beta-1,4-linked mannan and galactomannan, but displays little activity towards other polysaccharides located in the plant cell wall. Preferentially hydrolyzes the larger oligosaccharides and has greater activity against non-substituted polysaccharides. It displays tight specificity for mannose at both the -2 and the -1 subsites. Appears to act in synergy with alpha-galactosidase (AgaA) to elicit hydrolysis of galactomannan. The sequence is that of Mannan endo-1,4-beta-mannosidase from Cellvibrio japonicus (strain Ueda107) (Pseudomonas fluorescens subsp. cellulosa).